Here is a 414-residue protein sequence, read N- to C-terminus: Serine/threonine transporter SstT (414 aa).

8 helical membrane passes run 22-42 (GLVL…TIGF), 54-74 (IFVK…VMAA), 89-109 (IIVL…IAGF), 148-168 (AIFK…GLAL), 189-209 (IVHV…AETL), 223-243 (LLAV…PILV), 305-325 (MAGA…TLGL), and 337-357 (IVAA…LLLI).

This sequence belongs to the dicarboxylate/amino acid:cation symporter (DAACS) (TC 2.A.23) family.

The protein resides in the cell inner membrane. It carries out the reaction L-serine(in) + Na(+)(in) = L-serine(out) + Na(+)(out). The catalysed reaction is L-threonine(in) + Na(+)(in) = L-threonine(out) + Na(+)(out). Functionally, involved in the import of serine and threonine into the cell, with the concomitant import of sodium (symport system). This is Serine/threonine transporter SstT from Haemophilus influenzae (strain 86-028NP).